The following is an 84-amino-acid chain: Small ribosomal subunit protein bS16 (84 aa).

The protein belongs to the bacterial ribosomal protein bS16 family.

The chain is Small ribosomal subunit protein bS16 from Desulforapulum autotrophicum (strain ATCC 43914 / DSM 3382 / VKM B-1955 / HRM2) (Desulfobacterium autotrophicum).